Consider the following 806-residue polypeptide: Sucrose synthase (806 aa).

Positions 275–752 (MVFNVVILSP…GLQRIEEKYT (478 aa)) are GT-B glycosyltransferase.

The protein belongs to the glycosyltransferase 1 family. Plant sucrose synthase subfamily.

It carries out the reaction an NDP-alpha-D-glucose + D-fructose = a ribonucleoside 5'-diphosphate + sucrose + H(+). Functionally, sucrose-cleaving enzyme that provides UDP-glucose and fructose for various metabolic pathways. The sequence is that of Sucrose synthase (SUCS) from Vicia faba (Broad bean).